Here is a 71-residue protein sequence, read N- to C-terminus: DNA-directed RNA polymerase subunit epsilon (71 aa).

This sequence belongs to the RNA polymerase subunit epsilon family. As to quaternary structure, RNAP is composed of a core of 2 alpha, a beta and a beta' subunit. The core is associated with a delta subunit, and at least one of epsilon or omega. When a sigma factor is associated with the core the holoenzyme is formed, which can initiate transcription.

It catalyses the reaction RNA(n) + a ribonucleoside 5'-triphosphate = RNA(n+1) + diphosphate. A non-essential component of RNA polymerase (RNAP). The chain is DNA-directed RNA polymerase subunit epsilon from Staphylococcus saprophyticus subsp. saprophyticus (strain ATCC 15305 / DSM 20229 / NCIMB 8711 / NCTC 7292 / S-41).